The primary structure comprises 1440 residues: Gag-Pol polyprotein (1440 aa).

The N-myristoyl glycine; by host moiety is linked to residue G2. The interaction with Gp41 stretch occupies residues 7–31 (VLSGGKLDAWEKIRLRPGGKKKYRL). The segment at 8 to 43 (LSGGKLDAWEKIRLRPGGKKKYRLKHLVWASRELER) is interaction with host CALM1. An interaction with host AP3D1 region spans residues 12–19 (KLDAWEKI). The tract at residues 14–33 (DAWEKIRLRPGGKKKYRLKH) is interaction with membrane phosphatidylinositol 4,5-bisphosphate and RNA. The short motif at 16-22 (WEKIRLR) is the Nuclear export signal element. Residues 26 to 32 (KKKYRLK) carry the Nuclear localization signal motif. Positions 73–77 (EEIKS) are interaction with membrane phosphatidylinositol 4,5-bisphosphate. Residue Y138 is modified to Phosphotyrosine; by host. The segment at 195–233 (NIVGGHQAAMQMLKDTINEEAADWDRVHPVHAGPIPPGQ) is interaction with human PPIA/CYPA and NUP153. Residues 283 to 369 (YSPVSILDIR…GGPSHKARVL (87 aa)) are dimerization/Multimerization of capsid protein p24. 2 CCHC-type zinc fingers span residues 396 to 413 (IKCF…NCRA) and 417 to 434 (KGCW…DCTE). Residues 494-498 (PQITL) form a dimerization of protease region. Residues 513 to 582 (KEALLDTGAD…TPVNIIGRNM (70 aa)) enclose the Peptidase A2 domain. The active-site For protease activity; shared with dimeric partner is the D518. Dimerization of protease stretches follow at residues 542-548 (GIGGFIK) and 581-593 (NMLT…LNFP). The region spanning 636-826 (EGKILKIGPE…PPFLWMGYEL (191 aa)) is the Reverse transcriptase domain. Positions 702, 777, and 778 each coordinate Mg(2+). Residues 819–827 (FLWMGYELH) form an RT 'primer grip' region. Residues 990-1006 (WEAWWTEYWQATWIPEW) carry the Tryptophan repeat motif motif. Positions 1026–1149 (IVGAETFYVD…VDKLVSSGIR (124 aa)) constitute an RNase H type-1 domain. 4 residues coordinate Mg(2+): D1035, E1070, D1090, and D1141. The Integrase-type zinc-finger motif lies at 1155-1196 (DGIDKAQEEHEKYHSNWRAMASDFNLPPIVAKEIVASCDKCQ). Zn(2+) is bound by residues H1164, H1168, C1192, and C1195. The Integrase catalytic domain occupies 1206-1356 (VDCSPGIWQL…SAGERIIDMI (151 aa)). 3 residues coordinate Mg(2+): D1216, D1268, and E1304. A DNA-binding region (integrase-type) is located at residues 1375-1422 (FRVYYRDNRDPIWKGPAKLLWKGEGAVVIQDNSDIKVVPRRKAKIIRD).

Homotrimer; further assembles as hexamers of trimers. Interacts with gp41 (via C-terminus). Interacts with host CALM1; this interaction induces a conformational change in the Matrix protein, triggering exposure of the myristate group. Interacts with host AP3D1; this interaction allows the polyprotein trafficking to multivesicular bodies during virus assembly. Part of the pre-integration complex (PIC) which is composed of viral genome, matrix protein, Vpr and integrase. As to quaternary structure, homodimer; the homodimer further multimerizes as homohexamers or homopentamers. Interacts with human PPIA/CYPA; This interaction stabilizes the capsid. Interacts with human NUP153. Interacts with host PDZD8; this interaction stabilizes the capsid. Interacts with monkey TRIM5; this interaction destabilizes the capsid. In terms of assembly, homodimer, whose active site consists of two apposed aspartic acid residues. Heterodimer of p66 RT and p51 RT (RT p66/p51). Heterodimerization of RT is essential for DNA polymerase activity. The overall folding of the subdomains is similar in p66 RT and p51 RT but the spatial arrangements of the subdomains are dramatically different. As to quaternary structure, homotetramer; may further associate as a homohexadecamer. Part of the pre-integration complex (PIC) which is composed of viral genome, matrix protein, Vpr and integrase. Interacts with human SMARCB1/INI1 and human PSIP1/LEDGF isoform 1. Interacts with human KPNA3; this interaction might play a role in nuclear import of the pre-integration complex. Interacts with human NUP153; this interaction might play a role in nuclear import of the pre-integration complex. It depends on Mg(2+) as a cofactor. Specific enzymatic cleavages by the viral protease yield mature proteins. The protease is released by autocatalytic cleavage. The polyprotein is cleaved during and after budding, this process is termed maturation. Proteolytic cleavage of p66 RT removes the RNase H domain to yield the p51 RT subunit. Nucleocapsid protein p7 might be further cleaved after virus entry. Post-translationally, tyrosine phosphorylated presumably in the virion by a host kinase. Phosphorylation is apparently not a major regulator of membrane association. In terms of processing, phosphorylated possibly by host MAPK1; this phosphorylation is necessary for Pin1-mediated virion uncoating. Methylated by host PRMT6, impairing its function by reducing RNA annealing and the initiation of reverse transcription.

The protein resides in the host cell membrane. It is found in the host endosome. The protein localises to the host multivesicular body. It localises to the virion membrane. Its subcellular location is the host nucleus. The protein resides in the host cytoplasm. It is found in the virion. It carries out the reaction Specific for a P1 residue that is hydrophobic, and P1' variable, but often Pro.. It catalyses the reaction Endohydrolysis of RNA in RNA/DNA hybrids. Three different cleavage modes: 1. sequence-specific internal cleavage of RNA. Human immunodeficiency virus type 1 and Moloney murine leukemia virus enzymes prefer to cleave the RNA strand one nucleotide away from the RNA-DNA junction. 2. RNA 5'-end directed cleavage 13-19 nucleotides from the RNA end. 3. DNA 3'-end directed cleavage 15-20 nucleotides away from the primer terminus.. The catalysed reaction is 3'-end directed exonucleolytic cleavage of viral RNA-DNA hybrid.. The enzyme catalyses DNA(n) + a 2'-deoxyribonucleoside 5'-triphosphate = DNA(n+1) + diphosphate. With respect to regulation, protease: The viral protease is inhibited by many synthetic protease inhibitors (PIs), such as amprenavir, atazanavir, indinavir, loprinavir, nelfinavir, ritonavir and saquinavir. Use of protease inhibitors in tritherapy regimens permit more ambitious therapeutic strategies. Reverse transcriptase/ribonuclease H: RT can be inhibited either by nucleoside RT inhibitors (NRTIs) or by non nucleoside RT inhibitors (NNRTIs). NRTIs act as chain terminators, whereas NNRTIs inhibit DNA polymerization by binding a small hydrophobic pocket near the RT active site and inducing an allosteric change in this region. Classical NRTIs are abacavir, adefovir (PMEA), didanosine (ddI), lamivudine (3TC), stavudine (d4T), tenofovir (PMPA), zalcitabine (ddC), and zidovudine (AZT). Classical NNRTIs are atevirdine (BHAP U-87201E), delavirdine, efavirenz (DMP-266), emivirine (I-EBU), and nevirapine (BI-RG-587). The tritherapies used as a basic effective treatment of AIDS associate two NRTIs and one NNRTI. Its function is as follows. Mediates, with Gag polyprotein, the essential events in virion assembly, including binding the plasma membrane, making the protein-protein interactions necessary to create spherical particles, recruiting the viral Env proteins, and packaging the genomic RNA via direct interactions with the RNA packaging sequence (Psi). Gag-Pol polyprotein may regulate its own translation, by the binding genomic RNA in the 5'-UTR. At low concentration, the polyprotein would promote translation, whereas at high concentration, the polyprotein would encapsidate genomic RNA and then shut off translation. Functionally, targets the polyprotein to the plasma membrane via a multipartite membrane-binding signal, that includes its myristoylated N-terminus. Matrix protein is part of the pre-integration complex. Implicated in the release from host cell mediated by Vpu. Binds to RNA. Forms the conical core that encapsulates the genomic RNA-nucleocapsid complex in the virion. Most core are conical, with only 7% tubular. The core is constituted by capsid protein hexamer subunits. The core is disassembled soon after virion entry. Host restriction factors such as TRIM5-alpha or TRIMCyp bind retroviral capsids and cause premature capsid disassembly, leading to blocks in reverse transcription. Capsid restriction by TRIM5 is one of the factors which restricts HIV-1 to the human species. Host PIN1 apparently facilitates the virion uncoating. On the other hand, interactions with PDZD8 or CYPA stabilize the capsid. In terms of biological role, encapsulates and protects viral dimeric unspliced genomic RNA (gRNA). Binds these RNAs through its zinc fingers. Acts as a nucleic acid chaperone which is involved in rearangement of nucleic acid secondary structure during gRNA retrotranscription. Also facilitates template switch leading to recombination. As part of the polyprotein, participates in gRNA dimerization, packaging, tRNA incorporation and virion assembly. Its function is as follows. Aspartyl protease that mediates proteolytic cleavages of Gag and Gag-Pol polyproteins during or shortly after the release of the virion from the plasma membrane. Cleavages take place as an ordered, step-wise cascade to yield mature proteins. This process is called maturation. Displays maximal activity during the budding process just prior to particle release from the cell. Also cleaves Nef and Vif, probably concomitantly with viral structural proteins on maturation of virus particles. Hydrolyzes host EIF4GI and PABP1 in order to shut off the capped cellular mRNA translation. The resulting inhibition of cellular protein synthesis serves to ensure maximal viral gene expression and to evade host immune response. Also mediates cleavage of host YTHDF3. Mediates cleavage of host CARD8, thereby activating the CARD8 inflammasome, leading to the clearance of latent HIV-1 in patient CD4(+) T-cells after viral reactivation; in contrast, HIV-1 can evade CARD8-sensing when its protease remains inactive in infected cells prior to viral budding. Functionally, multifunctional enzyme that converts the viral RNA genome into dsDNA in the cytoplasm, shortly after virus entry into the cell. This enzyme displays a DNA polymerase activity that can copy either DNA or RNA templates, and a ribonuclease H (RNase H) activity that cleaves the RNA strand of RNA-DNA heteroduplexes in a partially processive 3' to 5' endonucleasic mode. Conversion of viral genomic RNA into dsDNA requires many steps. A tRNA(3)-Lys binds to the primer-binding site (PBS) situated at the 5'-end of the viral RNA. RT uses the 3' end of the tRNA primer to perform a short round of RNA-dependent minus-strand DNA synthesis. The reading proceeds through the U5 region and ends after the repeated (R) region which is present at both ends of viral RNA. The portion of the RNA-DNA heteroduplex is digested by the RNase H, resulting in a ssDNA product attached to the tRNA primer. This ssDNA/tRNA hybridizes with the identical R region situated at the 3' end of viral RNA. This template exchange, known as minus-strand DNA strong stop transfer, can be either intra- or intermolecular. RT uses the 3' end of this newly synthesized short ssDNA to perform the RNA-dependent minus-strand DNA synthesis of the whole template. RNase H digests the RNA template except for two polypurine tracts (PPTs) situated at the 5'-end and near the center of the genome. It is not clear if both polymerase and RNase H activities are simultaneous. RNase H probably can proceed both in a polymerase-dependent (RNA cut into small fragments by the same RT performing DNA synthesis) and a polymerase-independent mode (cleavage of remaining RNA fragments by free RTs). Secondly, RT performs DNA-directed plus-strand DNA synthesis using the PPTs that have not been removed by RNase H as primers. PPTs and tRNA primers are then removed by RNase H. The 3' and 5' ssDNA PBS regions hybridize to form a circular dsDNA intermediate. Strand displacement synthesis by RT to the PBS and PPT ends produces a blunt ended, linear dsDNA copy of the viral genome that includes long terminal repeats (LTRs) at both ends. Catalyzes viral DNA integration into the host chromosome, by performing a series of DNA cutting and joining reactions. This enzyme activity takes place after virion entry into a cell and reverse transcription of the RNA genome in dsDNA. The first step in the integration process is 3' processing. This step requires a complex comprising the viral genome, matrix protein, Vpr and integrase. This complex is called the pre-integration complex (PIC). The integrase protein removes 2 nucleotides from each 3' end of the viral DNA, leaving recessed CA OH's at the 3' ends. In the second step, the PIC enters cell nucleus. This process is mediated through integrase and Vpr proteins, and allows the virus to infect a non dividing cell. This ability to enter the nucleus is specific of lentiviruses, other retroviruses cannot and rely on cell division to access cell chromosomes. In the third step, termed strand transfer, the integrase protein joins the previously processed 3' ends to the 5' ends of strands of target cellular DNA at the site of integration. The 5'-ends are produced by integrase-catalyzed staggered cuts, 5 bp apart. A Y-shaped, gapped, recombination intermediate results, with the 5'-ends of the viral DNA strands and the 3' ends of target DNA strands remaining unjoined, flanking a gap of 5 bp. The last step is viral DNA integration into host chromosome. This involves host DNA repair synthesis in which the 5 bp gaps between the unjoined strands are filled in and then ligated. Since this process occurs at both cuts flanking the HIV genome, a 5 bp duplication of host DNA is produced at the ends of HIV-1 integration. Alternatively, Integrase may catalyze the excision of viral DNA just after strand transfer, this is termed disintegration. The protein is Gag-Pol polyprotein (gag-pol) of Human immunodeficiency virus type 1 group M subtype A (isolate MAL) (HIV-1).